The following is a 1044-amino-acid chain: Translation initiation factor IF-2 (1044 aa).

The interval 55–458 is disordered; sequence EAQEGQGAGK…KRKASAQERR (404 aa). Residues 57 to 77 show a composition bias toward low complexity; sequence QEGQGAGKSAAKSAKPAAQPK. The segment covering 104-146 has biased composition (basic and acidic residues); that stretch reads LSEKRERRPLTERRPLAERRPLAERPLVDRPVTERPLAERPAA. Low complexity-rich tracts occupy residues 147–168, 190–231, and 254–265; these read ELRP…AQPV, KAQP…QKPA, and ASSRPASAAPAA. The segment covering 267-281 has biased composition (basic and acidic residues); sequence GEKRPAAAAERREEP. Low complexity-rich tracts occupy residues 352–375 and 383–395; these read AAGQ…AGAP and APQR…APLA. Basic and acidic residues predominate over residues 399–444; that stretch reads LDPKVAEQAKAGEGKPRYGQSGDKRRADLYDRREHPSSQPSEEKLF. One can recognise a tr-type G domain in the interval 546 to 714; that stretch reads PRHPVVTIMG…ILVLAEVSDL (169 aa). Residues 555–562 are G1; the sequence is GHVDHGKT. Position 555–562 (555–562) interacts with GTP; it reads GHVDHGKT. The segment at 580-584 is G2; the sequence is GITQH. The interval 601-604 is G3; it reads DTPG. Residues 601-605 and 655-658 each bind GTP; these read DTPGH and NKID. Residues 655–658 form a G4 region; sequence NKID. The segment at 691 to 693 is G5; that stretch reads SAK.

The protein belongs to the TRAFAC class translation factor GTPase superfamily. Classic translation factor GTPase family. IF-2 subfamily.

It localises to the cytoplasm. One of the essential components for the initiation of protein synthesis. Protects formylmethionyl-tRNA from spontaneous hydrolysis and promotes its binding to the 30S ribosomal subunits. Also involved in the hydrolysis of GTP during the formation of the 70S ribosomal complex. The polypeptide is Translation initiation factor IF-2 (Symbiobacterium thermophilum (strain DSM 24528 / JCM 14929 / IAM 14863 / T)).